Here is a 177-residue protein sequence, read N- to C-terminus: ATP synthase subunit b, chloroplastic (177 aa).

The helical transmembrane segment at 26–44 threads the bilayer; sequence IINLSIVLFVVIRFLGEAL.

The protein belongs to the ATPase B chain family. As to quaternary structure, F-type ATPases have 2 components, F(1) - the catalytic core - and F(0) - the membrane proton channel. F(1) has five subunits: alpha(3), beta(3), gamma(1), delta(1), epsilon(1). F(0) has four main subunits: a(1), b(1), b'(1) and c(10-14). The alpha and beta chains form an alternating ring which encloses part of the gamma chain. F(1) is attached to F(0) by a central stalk formed by the gamma and epsilon chains, while a peripheral stalk is formed by the delta, b and b' chains.

The protein localises to the plastid. It is found in the chloroplast thylakoid membrane. Its function is as follows. F(1)F(0) ATP synthase produces ATP from ADP in the presence of a proton or sodium gradient. F-type ATPases consist of two structural domains, F(1) containing the extramembraneous catalytic core and F(0) containing the membrane proton channel, linked together by a central stalk and a peripheral stalk. During catalysis, ATP synthesis in the catalytic domain of F(1) is coupled via a rotary mechanism of the central stalk subunits to proton translocation. In terms of biological role, component of the F(0) channel, it forms part of the peripheral stalk, linking F(1) to F(0). The protein is ATP synthase subunit b, chloroplastic of Bigelowiella natans (Pedinomonas minutissima).